A 202-amino-acid chain; its full sequence is dITP/XTP pyrophosphatase (202 aa).

Substrate is bound at residue 7–12; it reads TTNEGK. Mg(2+)-binding residues include E37 and D66. The Proton acceptor role is filled by D66. Substrate-binding positions include S67, 155–158, K178, and 183–184; these read FGYD and HR.

It belongs to the HAM1 NTPase family. Homodimer. Requires Mg(2+) as cofactor.

It carries out the reaction XTP + H2O = XMP + diphosphate + H(+). The catalysed reaction is dITP + H2O = dIMP + diphosphate + H(+). It catalyses the reaction ITP + H2O = IMP + diphosphate + H(+). Functionally, pyrophosphatase that catalyzes the hydrolysis of nucleoside triphosphates to their monophosphate derivatives, with a high preference for the non-canonical purine nucleotides XTP (xanthosine triphosphate), dITP (deoxyinosine triphosphate) and ITP. Seems to function as a house-cleaning enzyme that removes non-canonical purine nucleotides from the nucleotide pool, thus preventing their incorporation into DNA/RNA and avoiding chromosomal lesions. The protein is dITP/XTP pyrophosphatase of Aquifex aeolicus (strain VF5).